The sequence spans 318 residues: Deoxyhypusine hydroxylase (318 aa).

Fe cation contacts are provided by H65, E66, H98, and E99. 4 HEAT-like PBS-type repeats span residues 96–122, 194–220, 225–251, and 258–284; these read VRHE…YYKE, YRYR…GFKD, FRHE…VLEN, and VRHE…FSKD. Residues H227, E228, H260, and E261 each contribute to the Fe cation site.

The protein belongs to the deoxyhypusine hydroxylase family. Requires Fe(2+) as cofactor.

It localises to the cytoplasm. The protein localises to the nucleus. It catalyses the reaction [eIF5A protein]-deoxyhypusine + AH2 + O2 = [eIF5A protein]-hypusine + A + H2O. It functions in the pathway protein modification; eIF5A hypusination. Its function is as follows. Catalyzes the hydroxylation of the N(6)-(4-aminobutyl)-L-lysine intermediate to form hypusine, an essential post-translational modification only found in mature eIF-5A factor. The chain is Deoxyhypusine hydroxylase (lia1) from Schizosaccharomyces pombe (strain 972 / ATCC 24843) (Fission yeast).